A 185-amino-acid polypeptide reads, in one-letter code: Threonylcarbamoyl-AMP synthase (185 aa).

The YrdC-like domain occupies Asn5–Arg185.

Belongs to the SUA5 family. TsaC subfamily.

The protein localises to the cytoplasm. The enzyme catalyses L-threonine + hydrogencarbonate + ATP = L-threonylcarbamoyladenylate + diphosphate + H2O. Its function is as follows. Required for the formation of a threonylcarbamoyl group on adenosine at position 37 (t(6)A37) in tRNAs that read codons beginning with adenine. Catalyzes the conversion of L-threonine, HCO(3)(-)/CO(2) and ATP to give threonylcarbamoyl-AMP (TC-AMP) as the acyladenylate intermediate, with the release of diphosphate. This chain is Threonylcarbamoyl-AMP synthase, found in Nitrosococcus oceani (strain ATCC 19707 / BCRC 17464 / JCM 30415 / NCIMB 11848 / C-107).